The sequence spans 272 residues: Bifunctional protein FolD 2 (272 aa).

NADP(+) is bound by residues 157-159 (GRS), Thr182, and Ile223.

The protein belongs to the tetrahydrofolate dehydrogenase/cyclohydrolase family. As to quaternary structure, homodimer.

The enzyme catalyses (6R)-5,10-methylene-5,6,7,8-tetrahydrofolate + NADP(+) = (6R)-5,10-methenyltetrahydrofolate + NADPH. It catalyses the reaction (6R)-5,10-methenyltetrahydrofolate + H2O = (6R)-10-formyltetrahydrofolate + H(+). The protein operates within one-carbon metabolism; tetrahydrofolate interconversion. Functionally, catalyzes the oxidation of 5,10-methylenetetrahydrofolate to 5,10-methenyltetrahydrofolate and then the hydrolysis of 5,10-methenyltetrahydrofolate to 10-formyltetrahydrofolate. The chain is Bifunctional protein FolD 2 from Syntrophomonas wolfei subsp. wolfei (strain DSM 2245B / Goettingen).